A 783-amino-acid polypeptide reads, in one-letter code: Cation/H(+) antiporter 2 (783 aa).

A run of 12 helical transmembrane segments spans residues 19-39 (LNTMFIQMACILVFSQLFYLL), 43-63 (CGQAGPVAQILAGIVLSPVLL), 81-101 (YYSFFSFALRTSFMFLIGLEV), 121-141 (FVVSGLLSFASLMLFIPLFGI), 145-165 (YFTFFLVLLVTLSNTASPVVV), 186-206 (ALFIELTNVVLYTIIMAFISG), 208-228 (IILELFLFLLATVALILINMV), 242-262 (YLSKAETLVFFIFLLIIGITI), 300-320 (EFVLPVYFGYIGFRFSIIALT), 323-343 (FYLGIVIIVIVTIAGKFIGVI), 355-375 (YWLFLPTILSVKGHVGLLLLD), and 391-411 (MMVAALVITTLVSGVLASFLL).

Belongs to the monovalent cation:proton antiporter 2 (CPA2) transporter (TC 2.A.37) family. CHX (TC 2.A.37.4) subfamily. Specifically expressed in pollen.

Its subcellular location is the membrane. In terms of biological role, may operate as a cation/H(+) antiporter. This is Cation/H(+) antiporter 2 (CHX2) from Arabidopsis thaliana (Mouse-ear cress).